The following is a 118-amino-acid chain: Large ribosomal subunit protein bL19 (118 aa).

It belongs to the bacterial ribosomal protein bL19 family.

In terms of biological role, this protein is located at the 30S-50S ribosomal subunit interface and may play a role in the structure and function of the aminoacyl-tRNA binding site. This is Large ribosomal subunit protein bL19 (rplS) from Helicobacter pylori (strain J99 / ATCC 700824) (Campylobacter pylori J99).